We begin with the raw amino-acid sequence, 400 residues long: ATP-dependent rRNA helicase RRP3 (400 aa).

Residues 1-29 (MEFGDLRIDESLIKTCQEKGITRPTEVQR) carry the Q motif motif. In terms of domain architecture, Helicase ATP-binding spans 32–202 (IPAVLGGGDV…SSILKRPKTI (171 aa)). 45 to 52 (SQTGSGKT) is an ATP binding site. Positions 150-153 (DEAD) match the DEAD box motif. Residues 229–373 (ALVELLEMSQ…EFKMMKKNFG (145 aa)) enclose the Helicase C-terminal domain.

The protein belongs to the DEAD box helicase family. DDX47/RRP3 subfamily. Interacts with the SSU processome.

It localises to the nucleus. The enzyme catalyses ATP + H2O = ADP + phosphate + H(+). Functionally, ATP-dependent rRNA helicase required for pre-ribosomal RNA processing. Involved in the maturation of the 35S-pre-rRNA and to its cleavage to mature 18S rRNA. This Encephalitozoon cuniculi (strain GB-M1) (Microsporidian parasite) protein is ATP-dependent rRNA helicase RRP3.